Consider the following 306-residue polypeptide: tRNA pseudouridine synthase B (306 aa).

Asp-51 functions as the Nucleophile in the catalytic mechanism.

This sequence belongs to the pseudouridine synthase TruB family. Type 1 subfamily.

It carries out the reaction uridine(55) in tRNA = pseudouridine(55) in tRNA. Responsible for synthesis of pseudouridine from uracil-55 in the psi GC loop of transfer RNAs. The sequence is that of tRNA pseudouridine synthase B from Nocardia farcinica (strain IFM 10152).